The primary structure comprises 870 residues: Lon protease (870 aa).

One can recognise a Lon N-terminal domain in the interval 1 to 270; the sequence is MPTNSYRFLV…KLYEHIHTFA (270 aa). Residue 454 to 461 coordinates ATP; that stretch reads GPPGTGKT. A Lon proteolytic domain is found at 691 to 870; that stretch reads SPQIGTVTGL…YQQIYDFIFK (180 aa). Catalysis depends on residues Ser777 and Lys820.

It belongs to the peptidase S16 family. Homohexamer. Organized in a ring with a central cavity.

The protein resides in the cytoplasm. It catalyses the reaction Hydrolysis of proteins in presence of ATP.. Its function is as follows. ATP-dependent serine protease that mediates the selective degradation of mutant and abnormal proteins as well as certain short-lived regulatory proteins. Required for cellular homeostasis and for survival from DNA damage and developmental changes induced by stress. Degrades polypeptides processively to yield small peptide fragments that are 5 to 10 amino acids long. Binds to DNA in a double-stranded, site-specific manner. The sequence is that of Lon protease from Mesomycoplasma hyopneumoniae (strain 232) (Mycoplasma hyopneumoniae).